The primary structure comprises 900 residues: MSTTSLQQFATATSFSPFSNSQSARMSQSQSQTIGLDTLAEGSQYVLEQLQLSREGGNSENNSTFKPSSVRDSLAEARSMIRKNSSSAPVRRRISRACDQCNQLRTKCDGQNPCAHCIEFGLTCEYARERKKRGKASKKDIAAAAAAAGHQGGMGNRSPTDRRLSQEPGGRYDSVLEASRVQSHLPANGLSSIHNTQAAHSQPPLGSALDALHLNHFTQLNESGRSQMPVSDLRSLQILHNNPRSPSALPHGLNAYNDNTFSLLNSQEPNTTSLNHFRLGNSTDNPSAQFLGLSPPAQSPGWLPLPSPSPANFPSFPMAPFSGTSLRYPVLQPVLPHIASIIPQSLACDLLDLYFTSSSSSHLSPQSPYVVGYIFRKQSFLHPTKPRVCSPGLLASMLWVGAQTSDAPFLTSPPSARGRVCQKLLELTIGLLRPLIHGPALGEASPNYAANMVINGVALGGFGVSMDQLGAQSTATGAVDDVATYVHLATVVSASEYKAASMRWWTAAWSLARELKLGRELPPNASQPGQDGERENEGDNPSKRNQSLHGGNSNVNVTEEEREERRRLWWLLYATDRHLALCYNRPLTLLDKECSQLLQPMNDDLWQAGDFPAATYRAVGPPIECTGHSMFGYFLPLMTILGGIIDLQQAREHPRYGLTFRSGPDLDQYIMAITQQLDAYGQSLKDFEARYINSLALAENEPPENPHIDHLSPSGRSSSTVGSRVNESIVHTKMVVAYGTHIMHVLYVLLAGKWDPINLLEDHDMWISSESFLAAMSHAVGAAEAAADILEYDPDLSFMPFFFGIYLLQGSFLLLLAADKLQGDANPSVVRACETIVRAHEACVVTLNTEYQRTFRKVMRSALAQVRGRVPDDFGEQQQRRREVLSLYRWTGDGTGLALS.

The span at 53-71 shows a compositional bias: polar residues; sequence SREGGNSENNSTFKPSSVR. Residues 53–75 form a disordered region; that stretch reads SREGGNSENNSTFKPSSVRDSLA. Residues 98–124 constitute a DNA-binding region (zn(2)-C6 fungal-type); that stretch reads CDQCNQLRTKCDGQNPCAHCIEFGLTC. Disordered stretches follow at residues 137–169, 520–559, and 701–722; these read SKKD…QEPG, ELPP…NVTE, and EPPE…STVG. Residues 531–542 are compositionally biased toward basic and acidic residues; it reads DGERENEGDNPS. Polar residues predominate over residues 543 to 557; that stretch reads KRNQSLHGGNSNVNV. The span at 712–722 shows a compositional bias: low complexity; that stretch reads SPSGRSSSTVG.

The protein belongs to the xlnR/xlr1 family.

It localises to the nucleus. In terms of biological role, transcriptional activator of the xylanolytic system. Involved in the regulation of extracellular cellulolytic and xylanolytic genes and in the regulation of the intracellular activities of D-xylose catabolic genes in the pentose catabolic pathway (PCP) in response to the presence of D-xylose. Binds to the DNA sequence 5'-GGNTAAA-3'. The protein is Xylanolytic transcriptional activator xlnR (xlnR) of Emericella nidulans (strain FGSC A4 / ATCC 38163 / CBS 112.46 / NRRL 194 / M139) (Aspergillus nidulans).